The sequence spans 41 residues: Maticotoxin A (41 aa).

Intrachain disulfides connect Cys3/Cys22 and Cys15/Cys39.

It belongs to the three-finger toxin family. Short-chain subfamily. Expressed by the venom gland.

The protein localises to the secreted. In Calliophis bivirgatus (Blue Malaysian coral snake), this protein is Maticotoxin A.